Here is a 603-residue protein sequence, read N- to C-terminus: Polypeptide N-acetylgalactosaminyltransferase 10 (603 aa).

The Cytoplasmic portion of the chain corresponds to 1–11 (MRRKEKRLLQA). Residues 12 to 31 (VALALAALVLLPNVGLWALY) form a helical; Signal-anchor for type II membrane protein membrane-spanning segment. Residues 32–603 (RERQPDGSPG…STVLENFNRN (572 aa)) are Lumenal-facing. Residues Asn-124 and Asn-146 are each glycosylated (N-linked (GlcNAc...) asparagine). 5 disulfide bridges follow: Cys-135–Cys-365, Cys-356–Cys-432, Cys-471–Cys-488, Cys-523–Cys-538, and Cys-563–Cys-578. The segment at 144–253 (LPNTSIIIPF…VNWLPPLLDR (110 aa)) is catalytic subdomain A. Substrate is bound by residues Asp-185 and Arg-214. Asp-237 contacts Mn(2+). Ser-238 contributes to the substrate binding site. His-239 provides a ligand contact to Mn(2+). Positions 311–373 (PFESPVMAGG…PCSRVGHIYR (63 aa)) are catalytic subdomain B. Trp-342 is a substrate binding site. A Mn(2+)-binding site is contributed by His-370. Residues Arg-373 and Tyr-378 each contribute to the substrate site. A flexible loop region spans residues 373–384 (RKYVPYKVPAGV). The 133-residue stretch at 458–590 (AAWGEIRNVG…SSLTQQWLFE (133 aa)) folds into the Ricin B-type lectin domain. N-linked (GlcNAc...) asparagine glycosylation is present at Asn-593.

This sequence belongs to the glycosyltransferase 2 family. GalNAc-T subfamily. Requires Mn(2+) as cofactor. Highly expressed in the sublingual gland, testis, small intestine, colon and ovary. Expressed at intermediate level in heart, brain, spleen, lung, stomach, cervix and uterus.

Its subcellular location is the golgi apparatus membrane. It catalyses the reaction L-seryl-[protein] + UDP-N-acetyl-alpha-D-galactosamine = a 3-O-[N-acetyl-alpha-D-galactosaminyl]-L-seryl-[protein] + UDP + H(+). The catalysed reaction is L-threonyl-[protein] + UDP-N-acetyl-alpha-D-galactosamine = a 3-O-[N-acetyl-alpha-D-galactosaminyl]-L-threonyl-[protein] + UDP + H(+). It participates in protein modification; protein glycosylation. Its function is as follows. Catalyzes the initial reaction in O-linked oligosaccharide biosynthesis, the transfer of an N-acetyl-D-galactosamine residue to a serine or threonine residue on the protein receptor. Has activity toward Muc5Ac and EA2 peptide substrates. The polypeptide is Polypeptide N-acetylgalactosaminyltransferase 10 (Galnt10) (Rattus norvegicus (Rat)).